A 548-amino-acid polypeptide reads, in one-letter code: 5-epi-aristolochene synthase 2 (548 aa).

Residues D301, D305, D444, T448, and E452 each contribute to the Mg(2+) site. Residues 301-305 (DDTFD) carry the DDXXD motif motif.

The protein belongs to the terpene synthase family. As to quaternary structure, monomer. Mg(2+) is required as a cofactor. In terms of tissue distribution, expressed in roots, but not in shoots.

It localises to the cytoplasm. It catalyses the reaction (2E,6E)-farnesyl diphosphate = (+)-5-epi-aristolochene + diphosphate. It participates in secondary metabolite biosynthesis; terpenoid biosynthesis. In terms of biological role, catalyzes the cyclization of trans,trans-farnesyl diphosphate (FPP) to the bicyclic intermediate 5-epi-aristolochene, initial step in the conversion of FPP to the sesquiterpenoid antifungal phytoalexin capsidiol. Produces germacrene A as an enzyme-bound intermediate that is not released by the enzyme, but is further cyclized to produce the bicyclic 5-epi-aristolochene. This is 5-epi-aristolochene synthase 2 from Nicotiana attenuata (Coyote tobacco).